We begin with the raw amino-acid sequence, 276 residues long: Putative pyridoxine kinase (276 aa).

An ATP-binding site is contributed by Asn-139. Residue Glu-142 participates in Mg(2+) binding. Residues 176–180 (KGGKA), Asp-188, Gly-213, and Lys-238 contribute to the ATP site.

It belongs to the ThiD family.

The enzyme catalyses pyridoxal + ATP = pyridoxal 5'-phosphate + ADP + H(+). Its function is as follows. Phosphorylates B6 vitamers; functions in a salvage pathway. Uses pyridoxal, pyridoxine, and pyridoxamine as substrates. This Staphylococcus epidermidis (strain ATCC 35984 / DSM 28319 / BCRC 17069 / CCUG 31568 / BM 3577 / RP62A) protein is Putative pyridoxine kinase (pdxK).